Here is a 325-residue protein sequence, read N- to C-terminus: Brorin (325 aa).

The N-terminal stretch at 1-27 (MPSSTAMAVGALSSSLLVTCCLMVALC) is a signal peptide. The segment at 37–121 (AQAPEQPGQE…RPRGDTPQAE (85 aa)) is disordered. Basic and acidic residues-rich tracts occupy residues 44–56 (GQEKREHASRDGP) and 64–78 (RPARDEGGSGRDWKS). A Mediates cell adhesion motif is present at residues 114 to 116 (RGD). VWFC domains follow at residues 153-212 (KGCV…PQCK) and 216-274 (NYCE…PICK).

In terms of assembly, peripherally associated with AMPAR complex. AMPAR complex consists of an inner core made of 4 pore-forming GluA/GRIA proteins (GRIA1, GRIA2, GRIA3 and GRIA4) and 4 major auxiliary subunits arranged in a twofold symmetry. One of the two pairs of distinct binding sites is occupied either by CNIH2, CNIH3 or CACNG2, CACNG3. The other harbors CACNG2, CACNG3, CACNG4, CACNG8 or GSG1L. This inner core of AMPAR complex is complemented by outer core constituents binding directly to the GluA/GRIA proteins at sites distinct from the interaction sites of the inner core constituents. Outer core constituents include at least PRRT1, PRRT2, CKAMP44/SHISA9, FRRS1L and NRN1. The proteins of the inner and outer core serve as a platform for other, more peripherally associated AMPAR constituents, including VWC2. Alone or in combination, these auxiliary subunits control the gating and pharmacology of the AMPAR complex and profoundly impact their biogenesis and protein processing.

Its subcellular location is the secreted. It is found in the extracellular space. The protein resides in the extracellular matrix. The protein localises to the basement membrane. It localises to the synapse. Its function is as follows. BMP antagonist which may play a role in neural development. Promotes cell adhesion. The protein is Brorin (VWC2) of Homo sapiens (Human).